The following is a 317-amino-acid chain: 3-oxoacyl-[acyl-carrier-protein] reductase 5, chloroplastic (317 aa).

The N-terminal 57 residues, 1-57 (TTVAATKLTSLKATAGKLGYREICQVRQWAPLKSAMPHFGMLRCATSTVVKAQAQAQ), are a transit peptide targeting the chloroplast. 79–103 (VTGASRGIGKAIALSLGKAGCKVLV) is a binding site for NADP(+). Position 211 (Ser211) interacts with substrate. The active-site Proton acceptor is the Tyr224.

This sequence belongs to the short-chain dehydrogenases/reductases (SDR) family. In terms of assembly, homotetramer.

It localises to the plastid. The protein resides in the chloroplast. The enzyme catalyses a (3R)-hydroxyacyl-[ACP] + NADP(+) = a 3-oxoacyl-[ACP] + NADPH + H(+). It functions in the pathway lipid metabolism; fatty acid biosynthesis. This Brassica napus (Rape) protein is 3-oxoacyl-[acyl-carrier-protein] reductase 5, chloroplastic (bkr1).